The following is a 716-amino-acid chain: Protein C-mannosyl-transferase DPY19L3 (716 aa).

Over 1-43 (MMYIRQRKETKPIEVSEDFPSPKEDVKLEKKLPSGCASGRFWK) the chain is Cytoplasmic. A helical membrane pass occupies residues 44–64 (ILSSAVGGTVALCIGLLTSVY). Residues 65-154 (LATLHENDLW…RVLPIQKYLE (90 aa)) lie on the Lumenal side of the membrane. The N-linked (GlcNAc...) asparagine glycan is linked to Asn118. A helical transmembrane segment spans residues 155-182 (PVYFYIYTLFGLQAVYVTALYITSWLLS). Residues 183–184 (GT) lie on the Cytoplasmic side of the membrane. The segment at residues 185–197 (WLSGLLAALWYVT) is an intramembrane region (name=3). Residues 198–215 (NRIDTTRVEFTIPLRENW) lie on the Cytoplasmic side of the membrane. Positions 216-230 (ALPFFAIQIAAITYF) form an intramembrane region, name=4. Topologically, residues 231 to 239 (LRPNLQPLS) are cytoplasmic. The helical transmembrane segment at 240-256 (ERLTLLAIFVSTFLFSL) threads the bilayer. Over 257 to 262 (TWQFNQ) the chain is Lumenal. A helical transmembrane segment spans residues 263-279 (FMMLLQALVLFILDSLD). Residues 280–289 (MLPAMKATWL) lie on the Cytoplasmic side of the membrane. A helical transmembrane segment spans residues 290-306 (YGIQISCLLLVCTLQFF). Residues 307 to 308 (NS) lie on the Lumenal side of the membrane. Residues 309-323 (MILGSLLISFNLSVL) form a helical membrane-spanning segment. The Cytoplasmic portion of the chain corresponds to 324-338 (IVRKLQKNLKTGSFL). A helical membrane pass occupies residues 339–359 (TRIWKLLLHLLLVFCLTLFLN). The Lumenal segment spans residues 360 to 414 (NIIKKVLNLKSDEHIFKFLKAKFGFGATRDFDANLYLCEEAFGLLPLNTFQRLSE). A helical transmembrane segment spans residues 415–437 (TLLFYAYMFVLVVTVVTASVVAF). Topologically, residues 438–465 (HNLSDSTSLKSMDQTRKRAVDLKPEAAY) are cytoplasmic. A helical membrane pass occupies residues 466–485 (NLIHTILFGVLALSTMRMKY). Topologically, residues 486-487 (LW) are lumenal. The helical transmembrane segment at 488-499 (TSHMCVFASFGL) threads the bilayer. At 500-522 (CSSEVWELLLRLVHLCNPKRIWV) the chain is on the cytoplasmic side. The helical transmembrane segment at 523–539 (LRYLVPVLTLLYLCYKS) threads the bilayer. Residues 540–716 (WPGVMDELSE…FHVYKLSRNK (177 aa)) are Lumenal-facing. Asn704 carries N-linked (GlcNAc...) asparagine glycosylation.

Belongs to the dpy-19 family.

Its subcellular location is the endoplasmic reticulum membrane. The enzyme catalyses L-tryptophyl-[protein] + a di-trans,poly-cis-dolichyl beta-D-mannosyl phosphate = C-alpha-D-mannosyl-L-tryptophyl-[protein] + a di-trans,poly-cis-dolichyl phosphate + H(+). Its pathway is protein modification; protein glycosylation. In terms of biological role, C-mannosyltransferase that mediates C-mannosylation of tryptophan residues on target proteins. The reaction occurs on the luminal side of the endoplasmic reticulum and involves the transfer of a mannose unit from a dolichylphosphate mannose (Dol-P-Man) donor to an acceptor protein containing a WxxW or WxxC consensus sequence. C-mannosylates RSPO1, a Wnt signaling regulator, preferentially at the first Trp residue in the sequence WxxW. C-mannosylates the netrin receptor UNC5A, preferentially at the third tryptophan of WxxWxxWxxC sequence. This is Protein C-mannosyl-transferase DPY19L3 (Dpy19l3) from Mus musculus (Mouse).